Consider the following 527-residue polypeptide: ADP-ribosylation factor-like protein 13B (527 aa).

GTP is bound by residues 26–33 (GLDNAGKT), 69–73 (DLGGG), and 128–131 (NKQD). A compositionally biased stretch (basic and acidic residues) spans 200–248 (EEVRQEEARKKKEREERLRKQREERLRQQKEEEERAREVEKENELHDGK). Disordered stretches follow at residues 200–252 (EEVR…APSL) and 300–503 (GLPH…FSLV). Residues 381-444 (QPSDAGVGSS…GSVFAPRPAS (64 aa)) are compositionally biased toward low complexity. The span at 445 to 457 (AGGGGPGSRGSGS) shows a compositional bias: gly residues.

This sequence belongs to the small GTPase superfamily. Arf family. As to quaternary structure, monomer.

The protein resides in the cell projection. The protein localises to the cilium membrane. Functionally, cilium-specific protein required to control the microtubule-based, ciliary axoneme structure. May act by maintaining the association between IFT subcomplexes A and B. In Chlamydomonas reinhardtii (Chlamydomonas smithii), this protein is ADP-ribosylation factor-like protein 13B (ARL13).